We begin with the raw amino-acid sequence, 626 residues long: Myelin-associated glycoprotein (626 aa).

A signal peptide spans 1 to 19; sequence MIFLTALPLFWIMISASRG. Residues 20 to 325 are interaction with RTN4R and RTN4RL2; it reads GHWGAWMPSS…RTVGLSVMYA (306 aa). The Extracellular portion of the chain corresponds to 20–516; that stretch reads GHWGAWMPSS…HRLMWAKIGP (497 aa). Residues 22-120 form the Ig-like V-type domain; that stretch reads WGAWMPSSIS…LGGKYYFRGD (99 aa). 3 disulfides stabilise this stretch: Cys37/Cys165, Cys42/Cys100, and Cys159/Cys217. Position 65–67 (65–67) interacts with a ganglioside GT1b (d18:1(4E)); the sequence is YPK. A glycan (N-linked (GlcNAc...) asparagine) is linked at Asn99. Asn106 carries an N-linked (GlcNAc...) asparagine; partial glycan. Residues Arg118 and 124 to 128 contribute to the a ganglioside GT1b (d18:1(4E)) site; that span reads YNQYT. Ig-like C2-type domains lie at 139 to 237, 241 to 325, 327 to 412, and 413 to 508; these read NTPN…MDVK, VIVE…VMYA, WKPT…VEFA, and PVLL…GAHR. Asn223 and Asn246 each carry an N-linked (GlcNAc...) asparagine glycan. Cys261 and Cys305 are oxidised to a cystine. The N-linked (GlcNAc...) asparagine glycan is linked to Asn315. Cys347 and Cys392 are disulfide-bonded. An N-linked (GlcNAc...) asparagine glycan is attached at Asn406. Disulfide bonds link Cys421/Cys430 and Cys432/Cys488. N-linked (GlcNAc...) asparagine glycosylation is found at Asn450 and Asn454. Residues 517-536 form a helical membrane-spanning segment; that stretch reads VGAVVAFAILIAIVCYITQT. Cys531 carries the S-palmitoyl cysteine lipid modification. The Cytoplasmic segment spans residues 537-626; the sequence is RRKKNVTESP…LAEYAEIRVK (90 aa). Residues Ser545, Ser547, and Ser549 each carry the phosphoserine modification. A required for normal axon myelination in the central nervous system region spans residues 577-626; it reads LGSERRLLGLRGEPPELDLSYSHSDLGKRPTKDSYTLTEELAEYAEIRVK. The segment at 582–608 is disordered; sequence RLLGLRGEPPELDLSYSHSDLGKRPTK.

The protein belongs to the immunoglobulin superfamily. SIGLEC (sialic acid binding Ig-like lectin) family. Monomer and homodimer. Interacts (via the first three N-terminal Ig-like domains) with RTN4R and RTN4RL2. Interacts with RTN4R. Interacts with isoform 2 of BSG. In terms of processing, N-glycosylated. Post-translationally, phosphorylated on tyrosine residues. Ubiquitinated, leading to proteasomal degradation. Both isoform 1 and isoform 2 are detected in myelinated structures in the central and peripheral nervous system, in periaxonal myelin and at Schmidt-Lanterman incisures. Detected in optic nerve, in oligodendroglia and in periaxonal myelin sheaths. Detected in compact myelin (at protein level). Both isoform 1 and isoform 2 are detected in the central and peripheral nervous system.

The protein resides in the cell membrane. It localises to the membrane raft. Functionally, adhesion molecule that mediates interactions between myelinating cells and neurons by binding to neuronal sialic acid-containing gangliosides and to the glycoproteins RTN4R and RTN4RL2. Not required for initial myelination, but seems to play a role in the maintenance of normal axon myelination. Protects motoneurons against apoptosis, also after injury; protection against apoptosis is probably mediated via interaction with neuronal RTN4R and RTN4RL2. Required to prevent degeneration of myelinated axons in adults; this probably depends on binding to gangliosides on the axon cell membrane. Negative regulator of neurite outgrowth; in dorsal root ganglion neurons the inhibition is mediated primarily via binding to neuronal RTN4R or RTN4RL2 and to a lesser degree via binding to neuronal gangliosides. In cerebellar granule cells the inhibition is mediated primarily via binding to neuronal gangliosides. In sensory neurons, inhibition of neurite extension depends only partially on RTN4R, RTN4RL2 and gangliosides. Inhibits axon longitudinal growth. Inhibits axon outgrowth by binding to RTN4R. Preferentially binds to alpha-2,3-linked sialic acid. Binds ganglioside Gt1b. This is Myelin-associated glycoprotein (MAG) from Homo sapiens (Human).